The primary structure comprises 263 residues: Shikimate dehydrogenase (NADP(+)) (263 aa).

Shikimate is bound by residues Thr-21–Ser-23 and Thr-67. The active-site Proton acceptor is Lys-71. An NADP(+)-binding site is contributed by Glu-83. Positions 92 and 103 each coordinate shikimate. NADP(+)-binding positions include Gly-126 to Ala-130 and Leu-204. Position 206 (Tyr-206) interacts with shikimate. Position 227 (Gly-227) interacts with NADP(+).

This sequence belongs to the shikimate dehydrogenase family. As to quaternary structure, homodimer.

It catalyses the reaction shikimate + NADP(+) = 3-dehydroshikimate + NADPH + H(+). It participates in metabolic intermediate biosynthesis; chorismate biosynthesis; chorismate from D-erythrose 4-phosphate and phosphoenolpyruvate: step 4/7. Its function is as follows. Involved in the biosynthesis of the chorismate, which leads to the biosynthesis of aromatic amino acids. Catalyzes the reversible NADPH linked reduction of 3-dehydroshikimate (DHSA) to yield shikimate (SA). The protein is Shikimate dehydrogenase (NADP(+)) of Sulfolobus acidocaldarius (strain ATCC 33909 / DSM 639 / JCM 8929 / NBRC 15157 / NCIMB 11770).